A 208-amino-acid chain; its full sequence is Small ribosomal subunit protein eS8 (208 aa).

This sequence belongs to the eukaryotic ribosomal protein eS8 family. As to quaternary structure, component of the small ribosomal subunit. Identified in a IGF2BP1-dependent mRNP granule complex containing untranslated mRNAs. Part of the small subunit (SSU) processome, composed of more than 70 proteins and the RNA chaperone small nucleolar RNA (snoRNA) U3.

It localises to the cytoplasm. Its subcellular location is the membrane. It is found in the nucleus. The protein resides in the nucleolus. In terms of biological role, component of the small ribosomal subunit. The ribosome is a large ribonucleoprotein complex responsible for the synthesis of proteins in the cell. Part of the small subunit (SSU) processome, first precursor of the small eukaryotic ribosomal subunit. During the assembly of the SSU processome in the nucleolus, many ribosome biogenesis factors, an RNA chaperone and ribosomal proteins associate with the nascent pre-rRNA and work in concert to generate RNA folding, modifications, rearrangements and cleavage as well as targeted degradation of pre-ribosomal RNA by the RNA exosome. The chain is Small ribosomal subunit protein eS8 (rps-8) from Caenorhabditis elegans.